Here is a 621-residue protein sequence, read N- to C-terminus: MDSHTLIQALIYLGAAALIVPIAVRLGLGSVLGYLIAGCIIGPWALRLVTDAEAILHFAEIGVVLMLFVIGLELDPQRLWKLRASVFGGGALQMVACGVLIGLFCMLLGLRWQVAELIGMTLALSSTAIAMQAMNERNLTVSQMGRSAFAVLLFQDIAAIPLVAMIPLLAASGGATSLMAFALSALKVAAALALVVVLGRYLTRPLLRFVARSGLREVFSAVALFLVFGFGLLLEEVGLSMAMGAFLAGVLLASSEYRHALESDIEPFKGLLLGLFFIGVGMSIDFGTLVTHPLRIVILLVGFLAIKMLMLWLIARPLGVPRAQRRWFAVLLGQGSEFAFVVFGAARMADVLDGEWAKALTLAVALSMAATPILLVLLTRLEKSSSGQARDADEIDEEQPRVIVAGFGRFGQIAGRLLLSSGVKMVILDHDPDHVDTLRKFDMKVFYGDATRVDLLESAGAEKAEVLINAIDDPHVSLELVARVKEHFPHLQIISRARDVDHYIQLRQAGVEAPERETFEAALKSGRMTLEALGLGAYEARERADLFRRFNLQMVEEMVAMAENDAASRVAVFKRTSDMLTGIINEDRHHLSLVQRHGWQGTEEGRHTGDIADEPENKPSA.

Helical transmembrane passes span 4–24, 26–46, 54–74, 90–110, 114–134, 149–169, 178–198, 218–237, 238–257, 270–290, 294–314, 326–346, and 359–379; these read HTLIQALIYLGAAALIVPIAV, LGLGSVLGYLIAGCIIGPWAL, AILHFAEIGVVLMLFVIGLEL, GALQMVACGVLIGLFCMLLGL, VAELIGMTLALSSTAIAMQAM, FAVLLFQDIAAIPLVAMIPLL, LMAFALSALKVAAALALVVVL, VFSAVALFLVFGFGLLLEEV, GLSMAMGAFLAGVLLASSEY, GLLLGLFFIGVGMSIDFGTLV, LRIVILLVGFLAIKMLMLWLI, RWFAVLLGQGSEFAFVVFGAA, and ALTLAVALSMAATPILLVLLT. In terms of domain architecture, RCK N-terminal spans 399–518; sequence QPRVIVAGFG…AGVEAPERET (120 aa). Residues 598–621 form a disordered region; that stretch reads GWQGTEEGRHTGDIADEPENKPSA.

Belongs to the monovalent cation:proton antiporter 2 (CPA2) transporter (TC 2.A.37) family. KefC subfamily. As to quaternary structure, homodimer. Interacts with the regulatory subunit KefF.

It is found in the cell inner membrane. Functionally, pore-forming subunit of a potassium efflux system that confers protection against electrophiles. Catalyzes K(+)/H(+) antiport. In Klebsiella pneumoniae subsp. pneumoniae (strain ATCC 700721 / MGH 78578), this protein is Glutathione-regulated potassium-efflux system protein KefC.